The following is a 414-amino-acid chain: Inositol-tetrakisphosphate 1-kinase (414 aa).

Residue lysine 18 participates in 1D-myo-inositol 1,3,4-trisphosphate binding. Residues arginine 106 and lysine 157 each coordinate ATP. An ATP-grasp domain is found at 117-325; that stretch reads EAYMEDDRIC…IATVLQGQST (209 aa). 1D-myo-inositol 1,3,4-trisphosphate-binding residues include histidine 167 and lysine 199. Residues 188–199, serine 214, serine 232, and serine 236 each bind ATP; that span reads QNFINHNAVLYK. Residues aspartate 281, aspartate 295, and asparagine 297 each contribute to the Mg(2+) site. Position 297 (asparagine 297) interacts with 1D-myo-inositol 1,3,4-trisphosphate. Lysine 340 and lysine 383 each carry N6-acetyllysine; by EP300 and CREBBP. The residue at position 396 (serine 396) is a Phosphoserine. N6-acetyllysine; by EP300 and CREBBP is present on lysine 410.

This sequence belongs to the ITPK1 family. Monomer. Interacts with GPS1/COPS1. Mg(2+) is required as a cofactor. Acetylation by EP300 and CREBBP destabilizes ITPK1, and down-regulates enzymatic activity. Deacetylated by SIRT1. As to expression, expressed in brain &gt; heart &gt; skeletal muscle = kidney = pancreas = liver = placenta &gt; lung. In brain, it is expressed in cerebellum, cerebral cortex, medulla, spinal cord, occipital lobe, frontal lobe, temporal lobe and putamen.

It catalyses the reaction 1D-myo-inositol 3,4,5,6-tetrakisphosphate + ATP = 1D-myo-inositol 1,3,4,5,6-pentakisphosphate + ADP + H(+). The catalysed reaction is 1D-myo-inositol 1,3,4-trisphosphate + ATP = 1D-myo-inositol 1,3,4,5-tetrakisphosphate + ADP + H(+). The enzyme catalyses 1D-myo-inositol 1,3,4-trisphosphate + ATP = 1D-myo-inositol 1,3,4,6-tetrakisphosphate + ADP + H(+). It carries out the reaction 1D-myo-inositol 3,4,6-trisphosphate + ATP = 1D-myo-inositol 1,3,4,6-tetrakisphosphate + ADP + H(+). It catalyses the reaction 1D-myo-inositol 1,3,4-trisphosphate + 1D-myo-inositol 1,3,4,5,6-pentakisphosphate = 1D-myo-inositol 3,4,5,6-tetrakisphosphate + 1D-myo-inositol 1,3,4,6-tetrakisphosphate. The catalysed reaction is 1D-myo-inositol 1,3,4-trisphosphate + 1D-myo-inositol 1,3,4,5,6-pentakisphosphate = 1D-myo-inositol 3,4,5,6-tetrakisphosphate + 1D-myo-inositol 1,3,4,5-tetrakisphosphate. Its function is as follows. Kinase that can phosphorylate various inositol polyphosphate such as Ins(3,4,5,6)P4 or Ins(1,3,4)P3. Phosphorylates Ins(3,4,5,6)P4 at position 1 to form Ins(1,3,4,5,6)P5. This reaction is thought to have regulatory importance, since Ins(3,4,5,6)P4 is an inhibitor of plasma membrane Ca(2+)-activated Cl(-) channels, while Ins(1,3,4,5,6)P5 is not. Also phosphorylates Ins(1,3,4)P3 on O-5 and O-6 to form Ins(1,3,4,6)P4, an essential molecule in the hexakisphosphate (InsP6) pathway. Also acts as an inositol polyphosphate phosphatase that dephosphorylates Ins(1,3,4,5)P4 and Ins(1,3,4,6)P4 to Ins(1,3,4)P3, and Ins(1,3,4,5,6)P5 to Ins(3,4,5,6)P4. May also act as an isomerase that interconverts the inositol tetrakisphosphate isomers Ins(1,3,4,5)P4 and Ins(1,3,4,6)P4 in the presence of ADP and magnesium. Probably acts as the rate-limiting enzyme of the InsP6 pathway. Modifies TNF-alpha-induced apoptosis by interfering with the activation of TNFRSF1A-associated death domain. Plays an important role in MLKL-mediated necroptosis. Produces highly phosphorylated inositol phosphates such as inositolhexakisphosphate (InsP6) which bind to MLKL mediating the release of an N-terminal auto-inhibitory region leading to its activation. Essential for activated phospho-MLKL to oligomerize and localize to the cell membrane during necroptosis. The sequence is that of Inositol-tetrakisphosphate 1-kinase from Homo sapiens (Human).